Here is a 289-residue protein sequence, read N- to C-terminus: MAEITAALVKELRERTGQGMMECKKALVAAGGDIEKAIDDMRASGAIKAAKKAGNIAAEGSIAVKVSDDNKAAVIIEVNAQTDFLALQEDFKAFVAESLEKAFADKLTDAAPLIADRESAREALVAKCGENVNIRRLTRVEGDVVGAYLHGHRIGVLVNLKGGNPELAKEIAMHVAASNPQFLSPSQVSEEAVAKEKEIFLALNADKIAGKPENIVENMVKGRINKFLAEASLVEQPFVKDPEIKVGELAKKAGAEIVSFVRYEVGEGIEKAEVDFAAEVAAQLAASKQ.

The tract at residues Thr82–Leu85 is involved in Mg(2+) ion dislocation from EF-Tu.

It belongs to the EF-Ts family.

It localises to the cytoplasm. In terms of biological role, associates with the EF-Tu.GDP complex and induces the exchange of GDP to GTP. It remains bound to the aminoacyl-tRNA.EF-Tu.GTP complex up to the GTP hydrolysis stage on the ribosome. The sequence is that of Elongation factor Ts from Azotobacter vinelandii (strain DJ / ATCC BAA-1303).